Here is a 659-residue protein sequence, read N- to C-terminus: MFEIKAKDNRGRVGVLKTNSGDVKTPNLMPVIHPRKQTIDVKKYGADIVITNAYLIYKDEDLKKKAAEIGLHKLINFDGPIMTDSGSFQLSVYGDVDITNKEVIEFQELIKTDIGTSLDIPTAPFVTREKAEADLEVTLERAKEAVDYRNSQNMEMKLNSVVQGSTFPDLRRKCADELTKLDADLYPIGAVVPLMESYHYKELVDVVMNSVAHLPDSKPRHLMGAGHPMIFALAVAMGCDLFDSAAYILYAEDDRLLSVRGTYKLENLQEMPCSCEVCCNYTPDDLRAMPKEKRRDLIAQHNLNVSFAELRLIRQAIYEGSLMELVEERCRAHPNLLEALRQLGNYSKDLEKYDPRSKKSAFFYTGSESLYRSEVLRHIQKLRAMPRKRDLVILPPSRKPYSKYVSSKLGNFYVYGSEQELDLNNTDFMVLDIPFGLIPLEIDEIYPLSQNESPRTWDVSSLEFIEDFISEFVEYYDQVLIHSNVIKKLDIGLYNIHSQSDEIRYAKDDLKKVKAIADYQFGVGAGDALFAGNIKIEKSKKTGKIRHIYDGKTLIVNMRASDSFLILSKEGAKRLHAATQYPKNRVVVNKDSEPFSLEGKSVFAKFVVECDEDIRAKDEVLIVNEEDKLLAYGKALLGACEINDFQTGQAIKTRKGMKK.

The active-site Nucleophile is aspartate 84. Positions 119 and 190 each coordinate substrate. Zn(2+)-binding residues include cysteine 273, cysteine 275, and cysteine 278. Residues 583–658 enclose the PUA domain; that stretch reads KNRVVVNKDS…QAIKTRKGMK (76 aa).

It belongs to the archaeosine tRNA-ribosyltransferase family. The cofactor is Zn(2+).

The catalysed reaction is guanosine(15) in tRNA + 7-cyano-7-deazaguanine = 7-cyano-7-carbaguanosine(15) in tRNA + guanine. It functions in the pathway tRNA modification; archaeosine-tRNA biosynthesis. In terms of biological role, exchanges the guanine residue with 7-cyano-7-deazaguanine (preQ0) at position 15 in the dihydrouridine loop (D-loop) of archaeal tRNAs. In Methanobrevibacter smithii (strain ATCC 35061 / DSM 861 / OCM 144 / PS), this protein is tRNA-guanine(15) transglycosylase.